Consider the following 494-residue polypeptide: ATP synthase subunit alpha, chloroplastic (494 aa).

ATP is bound at residue 170-177 (GDRQTGKT).

This sequence belongs to the ATPase alpha/beta chains family. F-type ATPases have 2 components, CF(1) - the catalytic core - and CF(0) - the membrane proton channel. CF(1) has five subunits: alpha(3), beta(3), gamma(1), delta(1), epsilon(1). CF(0) has four main subunits: a, b, b' and c.

The protein localises to the plastid. The protein resides in the chloroplast thylakoid membrane. It catalyses the reaction ATP + H2O + 4 H(+)(in) = ADP + phosphate + 5 H(+)(out). Functionally, produces ATP from ADP in the presence of a proton gradient across the membrane. The alpha chain is a regulatory subunit. This chain is ATP synthase subunit alpha, chloroplastic, found in Pinus thunbergii (Japanese black pine).